Here is a 153-residue protein sequence, read N- to C-terminus: Prefoldin subunit alpha (153 aa).

This sequence belongs to the prefoldin subunit alpha family. As to quaternary structure, heterohexamer of two alpha and four beta subunits.

The protein localises to the cytoplasm. In terms of biological role, molecular chaperone capable of stabilizing a range of proteins. Seems to fulfill an ATP-independent, HSP70-like function in archaeal de novo protein folding. The chain is Prefoldin subunit alpha from Methanothrix thermoacetophila (strain DSM 6194 / JCM 14653 / NBRC 101360 / PT) (Methanosaeta thermophila).